A 115-amino-acid polypeptide reads, in one-letter code: NADH-ubiquinone oxidoreductase chain 3 (115 aa).

3 helical membrane-spanning segments follow: residues 4–24, 55–75, and 84–104; these read LMALLVNITLSTLLIIVAFWL, FFLVAITFLLFDLEIALLLPL, and INIMMLTAFILVSVLALGLAY.

This sequence belongs to the complex I subunit 3 family. As to quaternary structure, core subunit of respiratory chain NADH dehydrogenase (Complex I) which is composed of 45 different subunits. Interacts with TMEM186. Interacts with TMEM242.

The protein localises to the mitochondrion inner membrane. The catalysed reaction is a ubiquinone + NADH + 5 H(+)(in) = a ubiquinol + NAD(+) + 4 H(+)(out). Functionally, core subunit of the mitochondrial membrane respiratory chain NADH dehydrogenase (Complex I) which catalyzes electron transfer from NADH through the respiratory chain, using ubiquinone as an electron acceptor. Essential for the catalytic activity of complex I. The chain is NADH-ubiquinone oxidoreductase chain 3 from Peromyscus melanotis (Black-eared mouse).